We begin with the raw amino-acid sequence, 209 residues long: Large ribosomal subunit protein bL9 (209 aa).

The segment at 184–209 is disordered; that stretch reads SAASEDSDLVETPEDRATEEAEDEQP.

The protein belongs to the bacterial ribosomal protein bL9 family.

Binds to the 23S rRNA. The polypeptide is Large ribosomal subunit protein bL9 (Dinoroseobacter shibae (strain DSM 16493 / NCIMB 14021 / DFL 12)).